We begin with the raw amino-acid sequence, 324 residues long: Glucokinase (324 aa).

6–11 (IDIGGT) is an ATP binding site.

The protein belongs to the bacterial glucokinase family.

It localises to the cytoplasm. It carries out the reaction D-glucose + ATP = D-glucose 6-phosphate + ADP + H(+). This chain is Glucokinase, found in Zymomonas mobilis subsp. mobilis (strain ATCC 31821 / ZM4 / CP4).